A 177-amino-acid chain; its full sequence is Large ribosomal subunit protein uL6 (177 aa).

This sequence belongs to the universal ribosomal protein uL6 family. Part of the 50S ribosomal subunit.

In terms of biological role, this protein binds to the 23S rRNA, and is important in its secondary structure. It is located near the subunit interface in the base of the L7/L12 stalk, and near the tRNA binding site of the peptidyltransferase center. The sequence is that of Large ribosomal subunit protein uL6 from Rickettsia rickettsii (strain Iowa).